The primary structure comprises 245 residues: uncharacterized protein (245 aa).

This is an uncharacterized protein from Mycobacterium tuberculosis (strain CDC 1551 / Oshkosh).